The sequence spans 309 residues: Protein-L-isoaspartate O-methyltransferase 2 (309 aa).

The Nuclear localization signal motif lies at 23–28 (KKRKKK). Ser-144 is an active-site residue.

This sequence belongs to the methyltransferase superfamily. L-isoaspartyl/D-aspartyl protein methyltransferase family. As to expression, expressed in rosette leaves, stems, cauline leaves, flowers and developing seeds.

Its subcellular location is the nucleus. The enzyme catalyses [protein]-L-isoaspartate + S-adenosyl-L-methionine = [protein]-L-isoaspartate alpha-methyl ester + S-adenosyl-L-homocysteine. Its function is as follows. Catalyzes the methyl esterification of L-isoaspartyl residues in peptides and proteins that result from spontaneous decomposition of normal L-aspartyl and L-asparaginyl residues. It plays a role in the repair and/or degradation of damaged proteins. The polypeptide is Protein-L-isoaspartate O-methyltransferase 2 (PIMT2) (Arabidopsis thaliana (Mouse-ear cress)).